A 98-amino-acid polypeptide reads, in one-letter code: Co-chaperonin GroES (98 aa).

Positions 35–57 (EKPQEGKVISAGPGRVDDKGTRV) are disordered.

It belongs to the GroES chaperonin family. Heptamer of 7 subunits arranged in a ring. Interacts with the chaperonin GroEL.

It is found in the cytoplasm. Functionally, together with the chaperonin GroEL, plays an essential role in assisting protein folding. The GroEL-GroES system forms a nano-cage that allows encapsulation of the non-native substrate proteins and provides a physical environment optimized to promote and accelerate protein folding. GroES binds to the apical surface of the GroEL ring, thereby capping the opening of the GroEL channel. In Cutibacterium acnes (strain DSM 16379 / KPA171202) (Propionibacterium acnes), this protein is Co-chaperonin GroES.